A 190-amino-acid polypeptide reads, in one-letter code: NADH-dependent phenylglyoxylate dehydrogenase subunit gamma (190 aa).

In terms of assembly, dimer of heteropentamers composed of an alpha (PadG), a beta (PadI), a gamma (PadE), a delta (PadF) and an epsilon (PadH) subunit.

It catalyses the reaction phenylglyoxylate + NAD(+) + CoA = benzoyl-CoA + CO2 + NADH. With respect to regulation, activated by magnesium ions and thiamine diphosphate. Its function is as follows. Involved in the anaerobic metabolism of phenylalanine and phenylacetate. Catalyzes the oxidative decarboxylation of phenylglyoxylate to benzoyl-CoA and CO(2). It can also react slowly with 2-oxo-3-methylbutanoate and use different electron acceptors such as benzyl viologen, methyl viologen, FAD or FMN, but NAD seems to be the physiological electron acceptor. Also catalyzes an isotope exchange between CO(2) and the carboxyl group which proves partial or complete reversibility of the oxidative decarboxylation reaction. The sequence is that of NADH-dependent phenylglyoxylate dehydrogenase subunit gamma (padE) from Aromatoleum evansii (Azoarcus evansii).